A 122-amino-acid polypeptide reads, in one-letter code: Large ribosomal subunit protein uL14 (122 aa).

It belongs to the universal ribosomal protein uL14 family. Part of the 50S ribosomal subunit. Forms a cluster with proteins L3 and L19. In the 70S ribosome, L14 and L19 interact and together make contacts with the 16S rRNA in bridges B5 and B8.

Functionally, binds to 23S rRNA. Forms part of two intersubunit bridges in the 70S ribosome. The chain is Large ribosomal subunit protein uL14 from Pseudomonas fluorescens (strain ATCC BAA-477 / NRRL B-23932 / Pf-5).